A 513-amino-acid polypeptide reads, in one-letter code: Calcium-dependent protein kinase 24 (513 aa).

The tract at residues 1–33 (MQPDPSGSGGDGNANAKAKLAPPPVTAAGGRPV) is disordered. Positions 47–305 (YRIGKKLGQG…AHEVLCHPWI (259 aa)) constitute a Protein kinase domain. ATP contacts are provided by residues 53–61 (LGQGQFGTT) and Lys-76. Catalysis depends on Asp-171, which acts as the Proton acceptor. The tract at residues 311-341 (APDKPIDSAVLSRLKHFSAMNKLKKMALRVI) is autoinhibitory domain. 4 consecutive EF-hand domains span residues 348-383 (EEIGGLKELFKMIDTDDSGTITFDELKEGLKRVGSE), 384-419 (LTEHEIQALMEAADIDNSGTIDYGEFIAATLHMNKL), 420-455 (EREENLVSAFSFFDKDGSGFITIDELSQACREFGLD), and 458-489 (HLEDMIKDVDQNNDGQIDYSEFTAMMRKGNAG). 19 residues coordinate Ca(2+): Asp-361, Asp-363, Ser-365, Thr-367, Glu-372, Asp-397, Asp-399, Ser-401, Thr-403, Glu-408, Asp-433, Asp-435, Ser-437, Glu-444, Asp-467, Asn-469, Asp-471, Gln-473, and Glu-478.

It belongs to the protein kinase superfamily. Ser/Thr protein kinase family. CDPK subfamily. As to expression, expressed in roots.

It localises to the cytoplasm. The enzyme catalyses L-seryl-[protein] + ATP = O-phospho-L-seryl-[protein] + ADP + H(+). The catalysed reaction is L-threonyl-[protein] + ATP = O-phospho-L-threonyl-[protein] + ADP + H(+). Its activity is regulated as follows. Activated by calcium. Autophosphorylation may play an important role in the regulation of the kinase activity. In terms of biological role, may play a role in signal transduction pathways that involve calcium as a second messenger. Possesses calcium-dependent protein kinase activity in vitro. The sequence is that of Calcium-dependent protein kinase 24 from Oryza sativa subsp. japonica (Rice).